The following is a 354-amino-acid chain: Type II methylase M.HgiDII (354 aa).

The SAM-dependent MTase C5-type domain maps to 3–344; sequence GAVIDLFCGV…KSIKRFLEGL (342 aa). The active site involves cysteine 79.

Belongs to the class I-like SAM-binding methyltransferase superfamily. C5-methyltransferase family.

It catalyses the reaction a 2'-deoxycytidine in DNA + S-adenosyl-L-methionine = a 5-methyl-2'-deoxycytidine in DNA + S-adenosyl-L-homocysteine + H(+). Its function is as follows. A methylase that recognizes the double-stranded sequence 5'-GTCGAC-3', methylates C-? on both strands and protects the DNA from cleavage by the HgiDII endonuclease. The polypeptide is Type II methylase M.HgiDII (Herpetosiphon aurantiacus (Herpetosiphon giganteus)).